A 231-amino-acid chain; its full sequence is tRNA (guanine-N(1)-)-methyltransferase (231 aa).

S-adenosyl-L-methionine is bound by residues Gly-111 and 131–136 (LGNYVL).

It belongs to the RNA methyltransferase TrmD family. As to quaternary structure, homodimer.

The protein resides in the cytoplasm. The catalysed reaction is guanosine(37) in tRNA + S-adenosyl-L-methionine = N(1)-methylguanosine(37) in tRNA + S-adenosyl-L-homocysteine + H(+). In terms of biological role, specifically methylates guanosine-37 in various tRNAs. This chain is tRNA (guanine-N(1)-)-methyltransferase, found in Leptospira interrogans serogroup Icterohaemorrhagiae serovar copenhageni (strain Fiocruz L1-130).